The chain runs to 314 residues: Protoheme IX farnesyltransferase (314 aa).

Transmembrane regions (helical) follow at residues 30 to 50 (VMSLVVFTALVGLQAAPVSVH), 51 to 71 (PVIGFASILFVAIGAGASGAL), 122 to 142 (FLAAGLLAFTIFFYAVIYSMW), 151 to 171 (IVIGGAAGAFPPVIGWVIATG), 178 to 198 (WLMFALIFMWTPPHFWALALF), 224 to 244 (IIAYTVLLAVLAVGTGFSAIG), 247 to 267 (VYLAAALVLNALFLKGAIDIW), and 285 to 305 (FFRLSLWYLFAHFGAILLESA).

Belongs to the UbiA prenyltransferase family. Protoheme IX farnesyltransferase subfamily. In terms of assembly, interacts with CtaA.

Its subcellular location is the cell inner membrane. The catalysed reaction is heme b + (2E,6E)-farnesyl diphosphate + H2O = Fe(II)-heme o + diphosphate. The protein operates within porphyrin-containing compound metabolism; heme O biosynthesis; heme O from protoheme: step 1/1. Functionally, converts heme B (protoheme IX) to heme O by substitution of the vinyl group on carbon 2 of heme B porphyrin ring with a hydroxyethyl farnesyl side group. This is Protoheme IX farnesyltransferase from Roseobacter denitrificans (strain ATCC 33942 / OCh 114) (Erythrobacter sp. (strain OCh 114)).